Here is a 366-residue protein sequence, read N- to C-terminus: 5-amino-6-(D-ribitylamino)uracil--L-tyrosine 4-hydroxyphenyl transferase (366 aa).

Residues 51–290 (RCGNAITWVK…MIAISRLFLD (240 aa)) form the Radical SAM core domain. [4Fe-4S] cluster contacts are provided by Cys-70, Cys-74, and Cys-77.

It belongs to the radical SAM superfamily. CofH family. In terms of assembly, consists of two subunits, CofG and CofH. [4Fe-4S] cluster serves as cofactor.

It carries out the reaction 5-amino-6-(D-ribitylamino)uracil + L-tyrosine + S-adenosyl-L-methionine = 5-amino-5-(4-hydroxybenzyl)-6-(D-ribitylimino)-5,6-dihydrouracil + 2-iminoacetate + 5'-deoxyadenosine + L-methionine + H(+). Its pathway is cofactor biosynthesis; coenzyme F0 biosynthesis. Its function is as follows. Catalyzes the radical-mediated synthesis of 5-amino-5-(4-hydroxybenzyl)-6-(D-ribitylimino)-5,6-dihydrouracil from 5-amino-6-(D-ribitylamino)uracil and L-tyrosine. The polypeptide is 5-amino-6-(D-ribitylamino)uracil--L-tyrosine 4-hydroxyphenyl transferase (Methanospirillum hungatei JF-1 (strain ATCC 27890 / DSM 864 / NBRC 100397 / JF-1)).